We begin with the raw amino-acid sequence, 330 residues long: MKHLHVLLLCGGGGSEHEISLLSANYLESQLKELAEVSVTRVELFPDHWQTNDGRSCHLGMDRQLHFANEAKPVDFVVPCIHGFPGETGDIQSMLELIGLPYLGCGSEGSKLCFNKVSTKLWLSALDIPNTPFLFLSDNNEAAHAQAHTAFRNWGAVFVKAASQGSSVGCYKVTDAAKLSEAVNAAFGYSDQVLVEKAVRPRELEVAVYRYNDQLVATRPGEIATPSDSFYSYEEKYSSGSNSTTYLEAPGLSDAQISTIREYALKAFTQLGLKDLSRIDFFLTEDNEILLNEINTFPGMTPISMFPKLLEHHGDNFKQFLEGIIRSTVK.

An ATP-grasp domain is found at 120–326 (KLWLSALDIP…FKQFLEGIIR (207 aa)). Residue 150–205 (AFRNWGAVFVKAASQGSSVGCYKVTDAAKLSEAVNAAFGYSDQVLVEKAVRPRELE) coordinates ATP. Mg(2+)-binding residues include D280, E293, and N295.

This sequence belongs to the D-alanine--D-alanine ligase family. Mg(2+) serves as cofactor. It depends on Mn(2+) as a cofactor.

Its subcellular location is the cytoplasm. The catalysed reaction is 2 D-alanine + ATP = D-alanyl-D-alanine + ADP + phosphate + H(+). The protein operates within cell wall biogenesis; peptidoglycan biosynthesis. Functionally, cell wall formation. This chain is D-alanine--D-alanine ligase, found in Tolumonas auensis (strain DSM 9187 / NBRC 110442 / TA 4).